A 45-amino-acid polypeptide reads, in one-letter code: Psychimicin (45 aa).

Intrachain disulfides connect Cys10/Cys24, Cys14/Cys36, and Cys25/Cys42.

In terms of assembly, monomer. As to expression, hemolymph.

The protein resides in the secreted. In terms of biological role, has antimicrobial activity. Is particularly active against fungi, and to a lesser extent against Gram-positive and Gram-negative bacteria. This Oiketicus kirbyi (Bagworm moth) protein is Psychimicin.